Reading from the N-terminus, the 369-residue chain is Delta(12)-oleate desaturase (369 aa).

A run of 2 helical transmembrane segments spans residues 41 to 61 and 69 to 89; these read LLSD…YFPL and IAWP…WVIA. A Histidine box-1 motif is present at residues 90–94; it reads HECGH. A helical transmembrane segment spans residues 102 to 122; that stretch reads LIDDIVGLFFHSALLVPYFSW. The Histidine box-2 motif lies at 126 to 130; that stretch reads HRRHH. 3 helical membrane-spanning segments follow: residues 164-184, 207-227, and 234-254; these read LISL…FNMS, WIQV…LYRI, and FWVM…LVLI. A Histidine box-3 motif is present at residues 300-304; the sequence is HVVHH.

The protein belongs to the fatty acid desaturase type 1 family.

The protein resides in the membrane. It participates in lipid metabolism; polyunsaturated fatty acid biosynthesis. Functionally, delta(12)-fatty acid desaturase producing in a heterologous system linoleic acid (18:2(9Z,12Z)) and to a lower extent hexadecadienoic acid (16:2(9Z,12Z)). The polypeptide is Delta(12)-oleate desaturase (Trichosanthes kirilowii (Chinese snake gourd)).